A 64-amino-acid chain; its full sequence is Neurotoxin BmK-II (64 aa).

The LCN-type CS-alpha/beta domain occupies 2–64; sequence RDAYIAKPHN…VPIRIPGNCH (63 aa). 4 cysteine pairs are disulfide-bonded: C12–C63, C16–C36, C22–C46, and C26–C48.

Belongs to the long (4 C-C) scorpion toxin superfamily. Sodium channel inhibitor family. Alpha subfamily. As to expression, expressed by the venom gland.

It is found in the secreted. Its function is as follows. Binds to sodium channels (Nav) and inhibits the inactivation of the activated channels, thereby blocking neuronal transmission. This toxin is active against mammals and insects. BmK-II is 6-fold less toxic than BmK-I. The protein is Neurotoxin BmK-II of Olivierus martensii (Manchurian scorpion).